A 1231-amino-acid polypeptide reads, in one-letter code: ATP-dependent RNA helicase DHX30 (1231 aa).

The tract at residues 39–65 (PDGLEGARQEDEEEQPPPPGAEEQSTA) is disordered. DRBM domains lie at 80 to 148 (PKNL…CQLF) and 292 to 359 (PKNL…CQKL). The Helicase ATP-binding domain maps to 488 to 656 (LSAIEQNPVV…FGGCPVVKVP (169 aa)). 501 to 508 (GDTGCGKT) contributes to the ATP binding site. A DEAH box motif is present at residues 603–606 (DEVH). The 174-residue stretch at 697 to 870 (LITDLVLQID…NLVVQAKIHM (174 aa)) folds into the Helicase C-terminal domain.

Belongs to the DEAD box helicase family. DEAH subfamily.

Its subcellular location is the cytoplasm. The protein resides in the mitochondrion. The protein localises to the mitochondrion matrix. It localises to the mitochondrion nucleoid. It catalyses the reaction ATP + H2O = ADP + phosphate + H(+). Its function is as follows. RNA-dependent helicase. Plays an important role in the assembly of the mitochondrial large ribosomal subunit. Required for optimal function of the zinc-finger antiviral protein ZC3HAV1. Associates with mitochondrial DNA. Involved in nervous system development and differentiation through its involvement in the up-regulation of a number of genes which are required for neurogenesis, including GSC, NCAM1, neurogenin, and NEUROD. In Gallus gallus (Chicken), this protein is ATP-dependent RNA helicase DHX30 (DHX30).